A 275-amino-acid polypeptide reads, in one-letter code: Elongation factor Ts (275 aa).

Residues 76 to 79 are involved in Mg(2+) ion dislocation from EF-Tu; it reads TDFV.

It belongs to the EF-Ts family.

The protein localises to the cytoplasm. Functionally, associates with the EF-Tu.GDP complex and induces the exchange of GDP to GTP. It remains bound to the aminoacyl-tRNA.EF-Tu.GTP complex up to the GTP hydrolysis stage on the ribosome. The protein is Elongation factor Ts of Corynebacterium kroppenstedtii (strain DSM 44385 / JCM 11950 / CIP 105744 / CCUG 35717).